A 308-amino-acid polypeptide reads, in one-letter code: Homoserine kinase (308 aa).

Residue 95–105 coordinates ATP; it reads PQSRGLGSSAA.

Belongs to the GHMP kinase family. Homoserine kinase subfamily.

It is found in the cytoplasm. The catalysed reaction is L-homoserine + ATP = O-phospho-L-homoserine + ADP + H(+). Its pathway is amino-acid biosynthesis; L-threonine biosynthesis; L-threonine from L-aspartate: step 4/5. Its function is as follows. Catalyzes the ATP-dependent phosphorylation of L-homoserine to L-homoserine phosphate. The protein is Homoserine kinase of Corynebacterium jeikeium (strain K411).